Here is a 352-residue protein sequence, read N- to C-terminus: Aromatic amino acid aminotransferase (352 aa).

An N6-(pyridoxal phosphate)lysine modification is found at Lys-217.

Belongs to the class-II pyridoxal-phosphate-dependent aminotransferase family. In terms of assembly, homodimer. It depends on pyridoxal 5'-phosphate as a cofactor.

It catalyses the reaction an aromatic L-alpha-amino acid + 2-oxoglutarate = an aromatic oxo-acid + L-glutamate. Aminotransferase that catalyzes the conversion of aromatic amino acids and 2-oxoglutarate into corresponding aromatic oxo acids and L-glutamate. The chain is Aromatic amino acid aminotransferase from Cutibacterium acnes (strain DSM 16379 / KPA171202) (Propionibacterium acnes).